The following is a 403-amino-acid chain: Na(+)-translocating NADH-quinone reductase subunit B (403 aa).

The next 9 membrane-spanning stretches (helical) occupy residues Met-56–Gly-76, Ala-121–Phe-141, Ile-163–Ile-183, Trp-220–Ile-240, Thr-265–Trp-285, Ile-287–Ser-307, Met-312–Phe-332, Trp-348–Phe-368, and Gly-371–Val-391. Position 230 is an FMN phosphoryl threonine (Thr-230).

It belongs to the NqrB/RnfD family. In terms of assembly, composed of six subunits; NqrA, NqrB, NqrC, NqrD, NqrE and NqrF. The cofactor is FMN.

It is found in the cell inner membrane. It catalyses the reaction a ubiquinone + n Na(+)(in) + NADH + H(+) = a ubiquinol + n Na(+)(out) + NAD(+). Its function is as follows. NQR complex catalyzes the reduction of ubiquinone-1 to ubiquinol by two successive reactions, coupled with the transport of Na(+) ions from the cytoplasm to the periplasm. NqrA to NqrE are probably involved in the second step, the conversion of ubisemiquinone to ubiquinol. In Ectopseudomonas mendocina (strain ymp) (Pseudomonas mendocina), this protein is Na(+)-translocating NADH-quinone reductase subunit B.